The primary structure comprises 337 residues: Hsp90 co-chaperone Cdc37-like 1 (337 aa).

The span at 1 to 11 (MEQPWPPPGPW) shows a compositional bias: pro residues. The tract at residues 1 to 40 (MEQPWPPPGPWSLPRAEGEAEEESDFDVFPSSPRCPQLPG) is disordered. Positions 2-171 (EQPWPPPGPW…YEQKIRHFGM (170 aa)) are self-association. Phosphoserine occurs at positions 32 and 88. Residues 84 to 122 (HNSESLDQEHAKAQTAVSELRQREEEWRQKEEALVQREK) are a coiled coil. Residues 147 to 277 (KDTEDEDKSE…SRVRLYSQSQ (131 aa)) form a self-association and interaction with Hsp90 region. Residues 267 to 337 (KSRVRLYSQS…DDEPKMMDTV (71 aa)) are interaction with Hsp70. Residues 278 to 337 (SFQPMTVQNHVPHSGVGSIGLLESLPQNPDYLQYSISTALCSLNSVVHKEDDEPKMMDTV) form a required for interaction with STIP1 region.

It belongs to the CDC37 family. Self-associates. Forms complexes with Hsp70 and Hsp90. Interacts with CDC37, FKBP4, PPID and STIP1. In terms of tissue distribution, expressed in brain, heart, kidney, liver, placenta and skeletal muscle.

It localises to the cytoplasm. Co-chaperone that binds to numerous proteins and promotes their interaction with Hsp70 and Hsp90. The chain is Hsp90 co-chaperone Cdc37-like 1 (CDC37L1) from Homo sapiens (Human).